Reading from the N-terminus, the 231-residue chain is Phosphatidate cytidylyltransferase (231 aa).

6 helical membrane-spanning segments follow: residues 33 to 53 (FVVA…LVAI), 67 to 87 (IMYL…LIFL), 95 to 115 (WLIM…MIGG), 133 to 153 (WSGL…ISFI), 167 to 187 (IYLF…DLFI), and 206 to 226 (HGGV…LFFI).

The protein belongs to the CDS family.

The protein resides in the cell membrane. It catalyses the reaction a 1,2-diacyl-sn-glycero-3-phosphate + CTP + H(+) = a CDP-1,2-diacyl-sn-glycerol + diphosphate. It functions in the pathway phospholipid metabolism; CDP-diacylglycerol biosynthesis; CDP-diacylglycerol from sn-glycerol 3-phosphate: step 3/3. This Rickettsia bellii (strain RML369-C) protein is Phosphatidate cytidylyltransferase (cdsA).